The sequence spans 308 residues: MKPDAHHVKQFLLRLQDDICQTLSAVDGANFVEDSWRREAGGGGRSRVLRNGGIFEQAGVNFSHVHGDAMPASATAHRPELAGRSFEAMGVSLVVHPHNPYIPTSHANVRFFIAEKPGADPVWWFGGGFDLTPYYGFEEDAVHWHRTARDLCQPFGDDVYPRYKKWCDDYFFLKHRNEQRGIGGLFFDDLNTPDFDHCFAFMQAVGNGYTEAYLPIVERRKAMVWGERERNFQLYRRGRYVEFNLVWDRGTLFGLQTGGRTESILMSMPPLVRWEYDWQPEAGSPEAALSEFIQVRDWVSLPDNSSVS.

A substrate-binding site is contributed by S92. A divalent metal cation contacts are provided by H96 and H106. H106 acts as the Proton donor in catalysis. 108–110 (NVR) provides a ligand contact to substrate. The a divalent metal cation site is built by H145 and H175. The important for dimerization stretch occupies residues 240-275 (YVEFNLVWDRGTLFGLQTGGRTESILMSMPPLVRWE). 258–260 (GGR) contacts substrate.

Belongs to the aerobic coproporphyrinogen-III oxidase family. In terms of assembly, homodimer. The cofactor is a divalent metal cation.

The protein resides in the cytoplasm. It carries out the reaction coproporphyrinogen III + O2 + 2 H(+) = protoporphyrinogen IX + 2 CO2 + 2 H2O. Its pathway is porphyrin-containing compound metabolism; protoporphyrin-IX biosynthesis; protoporphyrinogen-IX from coproporphyrinogen-III (O2 route): step 1/1. In terms of biological role, involved in the heme biosynthesis. Catalyzes the aerobic oxidative decarboxylation of propionate groups of rings A and B of coproporphyrinogen-III to yield the vinyl groups in protoporphyrinogen-IX. In Salmonella paratyphi A (strain ATCC 9150 / SARB42), this protein is Oxygen-dependent coproporphyrinogen-III oxidase.